Consider the following 148-residue polypeptide: Deoxyuridine 5'-triphosphate nucleotidohydrolase (148 aa).

Substrate is bound by residues 67-69 (RSG), Asn80, 84-86 (LID), and Met94.

The protein belongs to the dUTPase family. Mg(2+) is required as a cofactor.

It catalyses the reaction dUTP + H2O = dUMP + diphosphate + H(+). It functions in the pathway pyrimidine metabolism; dUMP biosynthesis; dUMP from dCTP (dUTP route): step 2/2. Its function is as follows. This enzyme is involved in nucleotide metabolism: it produces dUMP, the immediate precursor of thymidine nucleotides and it decreases the intracellular concentration of dUTP so that uracil cannot be incorporated into DNA. The protein is Deoxyuridine 5'-triphosphate nucleotidohydrolase of Francisella tularensis subsp. holarctica (strain FTNF002-00 / FTA).